Reading from the N-terminus, the 107-residue chain is Integration host factor subunit beta (107 aa).

The interval 76–107 is disordered; sequence FVPHFKPGKELRERVDGRAGEPLKADDPDDDR. A compositionally biased stretch (basic and acidic residues) spans 82 to 101; sequence PGKELRERVDGRAGEPLKAD.

It belongs to the bacterial histone-like protein family. In terms of assembly, heterodimer of an alpha and a beta chain.

This protein is one of the two subunits of integration host factor, a specific DNA-binding protein that functions in genetic recombination as well as in transcriptional and translational control. The protein is Integration host factor subunit beta of Burkholderia cenocepacia (strain HI2424).